The chain runs to 370 residues: 3-isopropylmalate dehydrogenase (370 aa).

77-90 (GPKWDSVPYEVRPE) contacts NAD(+). The substrate site is built by Arg-97, Arg-107, Arg-135, and Asp-226. Residues Asp-226, Asp-250, and Asp-254 each contribute to the Mg(2+) site. 290–302 (GSAPDIAGKGIAN) provides a ligand contact to NAD(+).

It belongs to the isocitrate and isopropylmalate dehydrogenases family. LeuB type 1 subfamily. In terms of assembly, homodimer. It depends on Mg(2+) as a cofactor. Requires Mn(2+) as cofactor.

It is found in the cytoplasm. The catalysed reaction is (2R,3S)-3-isopropylmalate + NAD(+) = 4-methyl-2-oxopentanoate + CO2 + NADH. It functions in the pathway amino-acid biosynthesis; L-leucine biosynthesis; L-leucine from 3-methyl-2-oxobutanoate: step 3/4. Functionally, catalyzes the oxidation of 3-carboxy-2-hydroxy-4-methylpentanoate (3-isopropylmalate) to 3-carboxy-4-methyl-2-oxopentanoate. The product decarboxylates to 4-methyl-2 oxopentanoate. The sequence is that of 3-isopropylmalate dehydrogenase from Brucella suis biovar 1 (strain 1330).